The chain runs to 152 residues: SsrA-binding protein (152 aa).

The protein belongs to the SmpB family.

Its subcellular location is the cytoplasm. Its function is as follows. Required for rescue of stalled ribosomes mediated by trans-translation. Binds to transfer-messenger RNA (tmRNA), required for stable association of tmRNA with ribosomes. tmRNA and SmpB together mimic tRNA shape, replacing the anticodon stem-loop with SmpB. tmRNA is encoded by the ssrA gene; the 2 termini fold to resemble tRNA(Ala) and it encodes a 'tag peptide', a short internal open reading frame. During trans-translation Ala-aminoacylated tmRNA acts like a tRNA, entering the A-site of stalled ribosomes, displacing the stalled mRNA. The ribosome then switches to translate the ORF on the tmRNA; the nascent peptide is terminated with the 'tag peptide' encoded by the tmRNA and targeted for degradation. The ribosome is freed to recommence translation, which seems to be the essential function of trans-translation. This Rickettsia canadensis (strain McKiel) protein is SsrA-binding protein.